Consider the following 426-residue polypeptide: Glutamate-1-semialdehyde 2,1-aminomutase (426 aa).

Lys265 bears the N6-(pyridoxal phosphate)lysine mark.

Belongs to the class-III pyridoxal-phosphate-dependent aminotransferase family. HemL subfamily. Homodimer. The cofactor is pyridoxal 5'-phosphate.

It localises to the cytoplasm. It carries out the reaction (S)-4-amino-5-oxopentanoate = 5-aminolevulinate. It functions in the pathway porphyrin-containing compound metabolism; protoporphyrin-IX biosynthesis; 5-aminolevulinate from L-glutamyl-tRNA(Glu): step 2/2. The sequence is that of Glutamate-1-semialdehyde 2,1-aminomutase from Actinobacillus pleuropneumoniae serotype 7 (strain AP76).